The following is a 64-amino-acid chain: Fatty acid synthase (64 aa).

In terms of domain architecture, Carrier spans 1–64 (AEGEGQRDLL…VLSMREVRQL (64 aa)). S38 carries the O-(pantetheine 4'-phosphoryl)serine; alternate modification. A Phosphoserine; alternate modification is found at S38.

In terms of assembly, homodimer which is arranged in a head to tail fashion. Interacts with CEACAM1; this interaction is insulin and phosphorylation-dependent; reduces fatty-acid synthase activity.

The protein resides in the cytoplasm. The protein localises to the melanosome. It carries out the reaction acetyl-CoA + n malonyl-CoA + 2n NADPH + 2n H(+) = a long-chain fatty acid + (n+1) CoA + n CO2 + 2n NADP(+).. In terms of biological role, fatty acid synthetase catalyzes the formation of long-chain fatty acids from acetyl-CoA, malonyl-CoA and NADPH. This multifunctional protein has 7 catalytic activities as an acyl carrier protein. The chain is Fatty acid synthase (FASN) from Oryctolagus cuniculus (Rabbit).